Consider the following 259-residue polypeptide: Phosphate import ATP-binding protein PstB 1 (259 aa).

The region spanning 7–254 (VKPEDVYQIN…PDDHRTKDYI (248 aa)) is the ABC transporter domain. Residue 45–52 (GPSGCGKS) participates in ATP binding.

It belongs to the ABC transporter superfamily. Phosphate importer (TC 3.A.1.7) family. The complex is composed of two ATP-binding proteins (PstB), two transmembrane proteins (PstC and PstA) and a solute-binding protein (PstS).

It is found in the cell membrane. It catalyses the reaction phosphate(out) + ATP + H2O = ADP + 2 phosphate(in) + H(+). In terms of biological role, part of the ABC transporter complex PstSACB involved in phosphate import. Responsible for energy coupling to the transport system. The chain is Phosphate import ATP-binding protein PstB 1 from Bacillus licheniformis (strain ATCC 14580 / DSM 13 / JCM 2505 / CCUG 7422 / NBRC 12200 / NCIMB 9375 / NCTC 10341 / NRRL NRS-1264 / Gibson 46).